A 168-amino-acid chain; its full sequence is 2-C-methyl-D-erythritol 2,4-cyclodiphosphate synthase (168 aa).

A divalent metal cation contacts are provided by Asp13 and His15. 4-CDP-2-C-methyl-D-erythritol 2-phosphate contacts are provided by residues 13–15 (DVH) and 39–40 (HS). His47 is an a divalent metal cation binding site. Residues 61-63 (DIG), 66-70 (FPDTD), Phe144, and Lys147 each bind 4-CDP-2-C-methyl-D-erythritol 2-phosphate.

This sequence belongs to the IspF family. In terms of assembly, homotrimer. Requires a divalent metal cation as cofactor.

It catalyses the reaction 4-CDP-2-C-methyl-D-erythritol 2-phosphate = 2-C-methyl-D-erythritol 2,4-cyclic diphosphate + CMP. It functions in the pathway isoprenoid biosynthesis; isopentenyl diphosphate biosynthesis via DXP pathway; isopentenyl diphosphate from 1-deoxy-D-xylulose 5-phosphate: step 4/6. Functionally, involved in the biosynthesis of isopentenyl diphosphate (IPP) and dimethylallyl diphosphate (DMAPP), two major building blocks of isoprenoid compounds. Catalyzes the conversion of 4-diphosphocytidyl-2-C-methyl-D-erythritol 2-phosphate (CDP-ME2P) to 2-C-methyl-D-erythritol 2,4-cyclodiphosphate (ME-CPP) with a corresponding release of cytidine 5-monophosphate (CMP). This chain is 2-C-methyl-D-erythritol 2,4-cyclodiphosphate synthase, found in Cupriavidus metallidurans (strain ATCC 43123 / DSM 2839 / NBRC 102507 / CH34) (Ralstonia metallidurans).